The chain runs to 3961 residues: Hybrid PKS-NRPS synthetase phm1 (3961 aa).

Positions 4-436 (SEPIAIIGSA…GTNAHAIVEA (433 aa)) constitute a Ketosynthase family 3 (KS3) domain. Active-site for beta-ketoacyl synthase activity residues include Cys178, His317, and His356. The segment at 541 to 867 (VFTGQGAQWP…RSKNDILELS (327 aa)) is malonyl-CoA:ACP transacylase (MAT) domain. The interval 933-1068 (HPILGKRCLE…GTVTVTLAEP (136 aa)) is N-terminal hotdog fold. Residues 933–1234 (HPILGKRCLE…LELVPFTAAR (302 aa)) are dehydratase (DH) domain. The PKS/mFAS DH domain occupies 933–1236 (HPILGKRCLE…LVPFTAARPE (304 aa)). The active-site Proton acceptor; for dehydratase activity is the His966. The segment at 1083 to 1236 (MTEIEVDRFY…LVPFTAARPE (154 aa)) is C-terminal hotdog fold. Asp1143 functions as the Proton donor; for dehydratase activity in the catalytic mechanism. Positions 1376–1569 (FDFYDQGLGL…GFGGIDTSTP (194 aa)) are methyltransferase (MT) domain. Residues 2106–2277 (TYLLIGMSGQ…GVPGSAISIS (172 aa)) are ketoreductase (KR) domain. The Carrier 1 domain maps to 2386–2464 (QAATIIKDGF…ELLQEAMDRT (79 aa)). O-(pantetheine 4'-phosphoryl)serine is present on Ser2424. A disordered region spans residues 2482–2527 (PVTNTATPPPEVQVTGSASDSSRSLTPDGLSTSRPSTPVRTPMTEI). Polar residues predominate over residues 2495 to 2520 (VTGSASDSSRSLTPDGLSTSRPSTPV). Residues 2553-2993 (PMSYGQARFW…DLPRWAGADV (441 aa)) form a condensation (C) domain region. The segment at 3019 to 3424 (QMIGTYASKP…DGALFVHGRI (406 aa)) is adenylation (A) (KR) domain. The Carrier 2 domain maps to 3542 to 3616 (ANMEGRVAAL…GMARHVRAAF (75 aa)). Ser3576 is subject to O-(pantetheine 4'-phosphoryl)serine. The reductase (RED) domain stretch occupies residues 3725 to 3871 (ITDIVFHCAA…VRPVSDVATT (147 aa)).

It in the C-terminal section; belongs to the NRP synthetase family.

The protein operates within secondary metabolite biosynthesis. Functionally, hybrid PKS-NRPS synthetase; part of the gene cluster that mediates the biosynthesis of the trans-fused decalin-containing tetramic acid phomasetin, the stereochemical opposite of the HIV-1 integrase inhibitor equisetin. The PKS module of phm1 together with the enoylreductase phm4 catalyze the formation of the polyketide unit which is then conjugated to L-serine by the condensation domain of the phm1 NRPS module. Activity of the Dieckmann cyclase domain (RED) of phm1 results in release of the Dieckmann product intermediate. The Diels-Alderase phm7 then uses the Dieckmann product of phm1 as substrate and catalyzes the Diels-Alder cycloaddition to form the decalin ring of N-desmethylphomasetin. N-desmethylphomasetin is further methylated to phomasetin by the methyltransferase phm5. This Pyrenochaetopsis sp protein is Hybrid PKS-NRPS synthetase phm1.